Reading from the N-terminus, the 244-residue chain is NAD(P)H-quinone oxidoreductase subunit K (244 aa).

[4Fe-4S] cluster-binding residues include Cys-60, Cys-61, Cys-125, and Cys-156.

It belongs to the complex I 20 kDa subunit family. In terms of assembly, NDH-1 can be composed of about 15 different subunits; different subcomplexes with different compositions have been identified which probably have different functions. Requires [4Fe-4S] cluster as cofactor.

Its subcellular location is the cellular thylakoid membrane. The catalysed reaction is a plastoquinone + NADH + (n+1) H(+)(in) = a plastoquinol + NAD(+) + n H(+)(out). It catalyses the reaction a plastoquinone + NADPH + (n+1) H(+)(in) = a plastoquinol + NADP(+) + n H(+)(out). NDH-1 shuttles electrons from an unknown electron donor, via FMN and iron-sulfur (Fe-S) centers, to quinones in the respiratory and/or the photosynthetic chain. The immediate electron acceptor for the enzyme in this species is believed to be plastoquinone. Couples the redox reaction to proton translocation, and thus conserves the redox energy in a proton gradient. Cyanobacterial NDH-1 also plays a role in inorganic carbon-concentration. This is NAD(P)H-quinone oxidoreductase subunit K from Prochlorococcus marinus (strain AS9601).